The following is a 164-amino-acid chain: Phosphopantetheine adenylyltransferase (164 aa).

Thr-10 contributes to the substrate binding site. Residues 10 to 11 and His-18 contribute to the ATP site; that span reads TF. 3 residues coordinate substrate: Lys-42, Leu-74, and Arg-88. ATP contacts are provided by residues 89–91, Glu-99, and 124–130; these read GIR and YAFVSST.

Belongs to the bacterial CoaD family. Homohexamer. Requires Mg(2+) as cofactor.

It is found in the cytoplasm. It catalyses the reaction (R)-4'-phosphopantetheine + ATP + H(+) = 3'-dephospho-CoA + diphosphate. It participates in cofactor biosynthesis; coenzyme A biosynthesis; CoA from (R)-pantothenate: step 4/5. In terms of biological role, reversibly transfers an adenylyl group from ATP to 4'-phosphopantetheine, yielding dephospho-CoA (dPCoA) and pyrophosphate. The protein is Phosphopantetheine adenylyltransferase of Tolumonas auensis (strain DSM 9187 / NBRC 110442 / TA 4).